We begin with the raw amino-acid sequence, 389 residues long: ATP-dependent (S)-NAD(P)H-hydrate dehydratase (389 aa).

Positions 53-389 constitute a YjeF C-terminal domain; the sequence is TLQLVRNIIP…RGGGRLPQAL (337 aa). Residue Tyr85 is modified to Phosphotyrosine. Residues Glu153 and 205–211 contribute to the (6S)-NADPHX site; that span reads NHMEFSR. Residues 245 to 249 and 264 to 273 contribute to the ATP site; these read KGERD and GSSRRCGGQG. Asp274 contributes to the (6S)-NADPHX binding site. Disordered stretches follow at residues 316-350 and 369-389; these read KTRA…PGGC and RSLH…PQAL.

It belongs to the NnrD/CARKD family. It depends on Mg(2+) as a cofactor.

The protein localises to the mitochondrion. It carries out the reaction (6S)-NADHX + ATP = ADP + phosphate + NADH + H(+). The catalysed reaction is (6S)-NADPHX + ATP = ADP + phosphate + NADPH + H(+). In terms of biological role, catalyzes the dehydration of the S-form of NAD(P)HX at the expense of ATP, which is converted to ADP. Together with NAD(P)HX epimerase, which catalyzes the epimerization of the S- and R-forms, the enzyme allows the repair of both epimers of NAD(P)HX, a damaged form of NAD(P)H that is a result of enzymatic or heat-dependent hydration. This is ATP-dependent (S)-NAD(P)H-hydrate dehydratase from Macaca mulatta (Rhesus macaque).